A 190-amino-acid polypeptide reads, in one-letter code: MVEINRKTKETDIKCKLNLDGCGKININTGVGFFDHMLEALSKHSGIDIDLTCSGDLHIDAHHTVEDCGIVLGQALKKAIFPISAVERYGNATVVMDEAATTCALDLSNRPFLVYEVNVSGKVGDFDVELVEEFFHAVAGNAGLTVHIIQDRGRNKHHILEASFKAFAVALRRALVKNEKLGIPSTKGVL.

It belongs to the imidazoleglycerol-phosphate dehydratase family.

Its subcellular location is the cytoplasm. The enzyme catalyses D-erythro-1-(imidazol-4-yl)glycerol 3-phosphate = 3-(imidazol-4-yl)-2-oxopropyl phosphate + H2O. It functions in the pathway amino-acid biosynthesis; L-histidine biosynthesis; L-histidine from 5-phospho-alpha-D-ribose 1-diphosphate: step 6/9. The sequence is that of Imidazoleglycerol-phosphate dehydratase from Aliarcobacter butzleri (strain RM4018) (Arcobacter butzleri).